The sequence spans 371 residues: Carbamoyl phosphate synthase small chain (371 aa).

A CPSase region spans residues 1-182 (MGVHKKGYLV…KNPIVHTPKN (182 aa)). The L-glutamine site is built by Ser-49, Gly-235, and Gly-237. The 186-residue stretch at 186–371 (RVVVLDLGVK…EFVKILEGRK (186 aa)) folds into the Glutamine amidotransferase type-1 domain. Cys-263 serves as the catalytic Nucleophile. Positions 264, 267, 305, 307, and 308 each coordinate L-glutamine. Residues His-346 and Glu-348 contribute to the active site.

Belongs to the CarA family. Composed of two chains; the small (or glutamine) chain promotes the hydrolysis of glutamine to ammonia, which is used by the large (or ammonia) chain to synthesize carbamoyl phosphate. Tetramer of heterodimers (alpha,beta)4.

The enzyme catalyses hydrogencarbonate + L-glutamine + 2 ATP + H2O = carbamoyl phosphate + L-glutamate + 2 ADP + phosphate + 2 H(+). The catalysed reaction is L-glutamine + H2O = L-glutamate + NH4(+). Its pathway is amino-acid biosynthesis; L-arginine biosynthesis; carbamoyl phosphate from bicarbonate: step 1/1. It participates in pyrimidine metabolism; UMP biosynthesis via de novo pathway; (S)-dihydroorotate from bicarbonate: step 1/3. In terms of biological role, small subunit of the glutamine-dependent carbamoyl phosphate synthetase (CPSase). CPSase catalyzes the formation of carbamoyl phosphate from the ammonia moiety of glutamine, carbonate, and phosphate donated by ATP, constituting the first step of 2 biosynthetic pathways, one leading to arginine and/or urea and the other to pyrimidine nucleotides. The small subunit (glutamine amidotransferase) binds and cleaves glutamine to supply the large subunit with the substrate ammonia. The sequence is that of Carbamoyl phosphate synthase small chain from Pyrococcus furiosus (strain ATCC 43587 / DSM 3638 / JCM 8422 / Vc1).